Reading from the N-terminus, the 120-residue chain is Putative gamma-glutamylcyclotransferase MJ1514 (120 aa).

7 to 10 (YGSL) is a substrate binding site. The Proton acceptor role is filled by Glu-74.

It belongs to the gamma-glutamylcyclotransferase family.

Its function is as follows. Putative gamma-glutamylcyclotransferase. In Methanocaldococcus jannaschii (strain ATCC 43067 / DSM 2661 / JAL-1 / JCM 10045 / NBRC 100440) (Methanococcus jannaschii), this protein is Putative gamma-glutamylcyclotransferase MJ1514.